The primary structure comprises 325 residues: RepFIB replication protein A (325 aa).

A disordered region spans residues 279–298 (APNDESKENPLPPSPAEKVS).

It belongs to the initiator RepB protein family.

This protein is essential for plasmid replication; it is involved in copy control functions. In vitro, binds to the DNA repeat units, BCDD'D'', EFG and HIJ. This Escherichia coli protein is RepFIB replication protein A (repA).